The primary structure comprises 890 residues: Alanine--tRNA ligase (890 aa).

Zn(2+)-binding residues include His-564, His-568, Cys-677, and His-681.

Belongs to the class-II aminoacyl-tRNA synthetase family. Requires Zn(2+) as cofactor.

The protein localises to the cytoplasm. It carries out the reaction tRNA(Ala) + L-alanine + ATP = L-alanyl-tRNA(Ala) + AMP + diphosphate. Catalyzes the attachment of alanine to tRNA(Ala) in a two-step reaction: alanine is first activated by ATP to form Ala-AMP and then transferred to the acceptor end of tRNA(Ala). Also edits incorrectly charged Ser-tRNA(Ala) and Gly-tRNA(Ala) via its editing domain. This is Alanine--tRNA ligase from Rhodopseudomonas palustris (strain BisB18).